The sequence spans 496 residues: Latent membrane protein 2 (496 aa).

Positions 1-108 (MGSLEMVPMG…PPYSPRDDSS (108 aa)) are disordered. The Cytoplasmic portion of the chain corresponds to 1-123 (MGSLEMVPMG…EAGRGSMNPV (123 aa)). The span at 27–41 (NNSQYPSASGSSGNT) shows a compositional bias: polar residues. The short motif at 97–101 (PPPPY) is the PPxY motif element. Tyr-112 is modified (phosphotyrosine; by host). The helical transmembrane segment at 124-144 (CLPVIVAPYLFWLAAIAASCF) threads the bilayer. Over 145-147 (TAS) the chain is Extracellular. The chain crosses the membrane as a helical span at residues 148 to 168 (VSTVVTATGLALSLLLLAAVA). Over 169 to 177 (SSYAAAQRK) the chain is Cytoplasmic. The helical transmembrane segment at 178–197 (LLTPVTVLTAVVFFAICLTW) threads the bilayer. Residues 198–210 (RIEDPPFNSLLFA) lie on the Extracellular side of the membrane. A helical membrane pass occupies residues 211–231 (LLAAAGGLQGIYVLVMLVLLI). Over 232 to 240 (LAYRRRWRR) the chain is Cytoplasmic. A helical membrane pass occupies residues 241–261 (LTVCGGIMFLACVLVLIVDAV). At 262–266 (LQLSP) the chain is on the extracellular side. Residues 267–287 (LLGAVTVVSMTLLLLAFVLWL) traverse the membrane as a helical segment. The Cytoplasmic segment spans residues 288-295 (SSPGGLGT). The chain crosses the membrane as a helical span at residues 296-316 (LGAALLTLAAALALLASLILG). Residue Thr-317 is a topological domain, extracellular. Residues 318–338 (LNLTTMFLLMLLWTLVVLLIC) form a helical membrane-spanning segment. Residues 339 to 353 (SSCSSCPLTKILLAR) lie on the Cytoplasmic side of the membrane. A helical membrane pass occupies residues 354-374 (LFLYALALLLLASALIAGGSI). At 375 to 387 (LQTNFKSLSSTEF) the chain is on the extracellular side. The chain crosses the membrane as a helical span at residues 388–408 (IPNLFCMLLLIVAGILFILAI). At 409–421 (LTEWGSGNRTYGP) the chain is on the cytoplasmic side. The chain crosses the membrane as a helical span at residues 422–442 (VFMCLGGLLTMVAGAVWLTVM). The Extracellular segment spans residues 443-448 (TNTLLS). A helical membrane pass occupies residues 449 to 469 (AWILTAGFLIFLIGFALFGVI). Topologically, residues 470 to 496 (RCCRYCCYYCLTLESEERPPTPYRNTV) are cytoplasmic.

This sequence belongs to the herpesviridae LMP-2 family. As to quaternary structure, the cytoplasmic N-terminal domain interacts with human SRC family protein tyrosine kinases SYK and LYN. Binds human ITCH, WWP2 and NEDD4L. Post-translationally, phosphorylated on cytoplasmic N-terminal tyrosine residues, possibly by human LYN. Can be ubiquitinated by human ITCH and WWP2 on the N-terminus in a lysine-independent manner.

Its subcellular location is the host cell membrane. The protein resides in the host endomembrane system. It localises to the host cytoplasm. It is found in the host perinuclear region. In terms of biological role, maintains EBV latent infection of B-lymphocyte, by preventing lytic reactivation of the virus in response to surface immunoglobulin (sIg) cross-linking. Acts like a dominant negative inhibitor of the sIg-associated protein tyrosine kinases, LYN and SYK. Also blocks translocation of the B-cell antigen receptor (BCR) into lipid rafts, preventing the subsequent signaling and accelerated internalization of the BCR upon BCR cross-linking. Serves as a molecular scaffold to recruit SYK, LYN and E3 protein-ubiquitin ligases, such as ITCH and NEDD4L, leading to ubiquitination and potential degradation of both tyrosines kinases. Possesses a constitutive signaling activity in non-transformed cells, inducing bypass of normal B lymphocyte developmental checkpoints allowing immunoglobulin-negative cells to colonize peripheral lymphoid organs. May be a negative regulator of isoform LMP2A. The polypeptide is Latent membrane protein 2 (LMP2) (Homo sapiens (Human)).